Here is a 63-residue protein sequence, read N- to C-terminus: Cytochrome c oxidase subunit 5A, mitochondrial (63 aa).

It belongs to the cytochrome c oxidase subunit 5A family. In terms of assembly, component of the cytochrome c oxidase (complex IV, CIV), a multisubunit enzyme composed of a catalytic core of 3 subunits and several supernumerary subunits. The complex exists as a monomer or a dimer and forms supercomplexes (SCs) in the inner mitochondrial membrane with ubiquinol-cytochrome c oxidoreductase (cytochrome b-c1 complex, complex III, CIII).

It is found in the mitochondrion inner membrane. It participates in energy metabolism; oxidative phosphorylation. In terms of biological role, component of the cytochrome c oxidase, the last enzyme in the mitochondrial electron transport chain which drives oxidative phosphorylation. The respiratory chain contains 3 multisubunit complexes succinate dehydrogenase (complex II, CII), ubiquinol-cytochrome c oxidoreductase (cytochrome b-c1 complex, complex III, CIII) and cytochrome c oxidase (complex IV, CIV), that cooperate to transfer electrons derived from NADH and succinate to molecular oxygen, creating an electrochemical gradient over the inner membrane that drives transmembrane transport and the ATP synthase. Cytochrome c oxidase is the component of the respiratory chain that catalyzes the reduction of oxygen to water. Electrons originating from reduced cytochrome c in the intermembrane space (IMS) are transferred via the dinuclear copper A center (CU(A)) of subunit 2 and heme A of subunit 1 to the active site in subunit 1, a binuclear center (BNC) formed by heme A3 and copper B (CU(B)). The BNC reduces molecular oxygen to 2 water molecules using 4 electrons from cytochrome c in the IMS and 4 protons from the mitochondrial matrix. This chain is Cytochrome c oxidase subunit 5A, mitochondrial (COVA), found in Manduca sexta (Tobacco hawkmoth).